The following is a 487-amino-acid chain: Cyclic AMP-dependent transcription factor ATF-2 (487 aa).

A C2H2-type zinc finger spans residues 7-31; sequence FLCTAPGCGQRFTNEDHLAVHKHKH. 2 disordered regions span residues 106–132 and 267–354; these read EEPSVVETTHQDSPLPHPESTTNDEKE and QHPQ…CRQK. Over residues 298 to 319 the composition is skewed to low complexity; sequence QQPATSTTETPASPAQPTQQTP. Over residues 328 to 345 the composition is skewed to basic and acidic residues; sequence AANEDPDEKRRKFLERNR. One can recognise a bZIP domain in the interval 334-397; the sequence is DEKRRKFLER…AQLKQLLLAH (64 aa). The interval 336–356 is basic motif; that stretch reads KRRKFLERNRAAASRCRQKRK. The tract at residues 362 to 390 is leucine-zipper; it reads LEKKAEDLSSLNGQLQNEVTLLRNEVAQL. Residues 387–396 carry the Nuclear export signal motif; it reads VAQLKQLLLA. Residues 407–487 are disordered; that stretch reads KKSGYHTADK…PPSQAQPSGS (81 aa). The span at 425-436 shows a compositional bias: polar residues; it reads VPSSPHTEAIQH. The segment covering 437 to 449 has biased composition (low complexity); sequence SSVSTSNGVSSTS. Over residues 457–468 the composition is skewed to polar residues; that stretch reads SVLTQLADQSSE.

Belongs to the bZIP family. ATF subfamily. As to quaternary structure, binds DNA as a dimer and can form a homodimer in the absence of DNA. Can form a heterodimer with JUN. Heterodimerization is essential for its transcriptional activity.

Its subcellular location is the nucleus. The protein localises to the cytoplasm. It localises to the mitochondrion outer membrane. Transcriptional activator which regulates the transcription of various genes, including those involved in anti-apoptosis, cell growth, and DNA damage response. Dependent on its binding partner, binds to CRE (cAMP response element) consensus sequences (5'-TGACGTCA-3') or to AP-1 (activator protein 1) consensus sequences (5'-TGACTCA-3'). This chain is Cyclic AMP-dependent transcription factor ATF-2 (ATF2), found in Gallus gallus (Chicken).